The following is an 857-amino-acid chain: ATP-dependent RNA helicase DDX24 (857 aa).

A disordered region spans residues 61–179; that stretch reads NPSRLFSSEE…SPKLPKKSKK (119 aa). Ser-80 and Ser-92 each carry phosphoserine. The span at 152–161 shows a compositional bias: basic residues; sequence PRKKKNKGKK. Ser-170 is modified (phosphoserine). The Q motif signature appears at 193–221; the sequence is SAWRDLFVPKAVLRALSFLGFSAPTPIQA. Residues 225–528 form the Helicase ATP-binding domain; the sequence is APAIRDKLDI…RILHKKHVKK (304 aa). 238-245 contributes to the ATP binding site; it reads AETGSGKT. The interval 279-363 is disordered; the sequence is RFGATAHLGS…NEDGEEKFDA (85 aa). 2 positions are modified to phosphoserine: Ser-288 and Ser-296. Over residues 290-307 the composition is skewed to basic and acidic residues; the sequence is CKDRTESGVLPEEARIET. Over residues 309-330 the composition is skewed to polar residues; that stretch reads AQPSDSGVQATPETSASASAQT. Residues 345–363 show a composition bias toward basic and acidic residues; sequence LEEKPVPKQNEDGEEKFDA. Lys-370 is covalently cross-linked (Glycyl lysine isopeptide (Lys-Gly) (interchain with G-Cter in SUMO2)). Positions 471 to 474 match the DEAD box motif; that stretch reads DEAD. The 148-residue stretch at 576–723 folds into the Helicase C-terminal domain; the sequence is DLYLYYFLMQ…LFPVQSKYMD (148 aa). Residue Lys-624 forms a Glycyl lysine isopeptide (Lys-Gly) (interchain with G-Cter in SUMO2) linkage. The tract at residues 808–857 is disordered; sequence RYPTQSGRPPQPVLASRNIESALSCLSRQKRRRKKPKEPRAPPQPGSSTS. Positions 825–834 are enriched in polar residues; the sequence is NIESALSCLS. Residues 835–844 show a composition bias toward basic residues; it reads RQKRRRKKPK. Residues 848-857 are compositionally biased toward pro residues; that stretch reads APPQPGSSTS.

It belongs to the DEAD box helicase family. DDX24/MAK5 subfamily. As to quaternary structure, interacts with FADD. Interacts with RIPK1; this interaction disrupts RLR signaling activation of IFN-dependent transcription factor IRF7. Interacts with NIP7. Interacts with EP300; this interaction prevents TP53 acetylation mediated by EP300. Ubiquitinated by MDM2 without targeting DDX24 for proteasomal degradation. Instead, polyubiquitylated DDX24 promotes interaction with NIP7, a component of pre-rRNP processing complex, and associates with pre-rRNA molecules and pre-ribosomal particles.

Its subcellular location is the cytoplasm. The protein resides in the nucleus. It carries out the reaction ATP + H2O = ADP + phosphate + H(+). Functionally, ATP-dependent RNA helicase that plays a role in various aspects of RNA metabolism including pre-mRNA splicing and is thereby involved in different biological processes such as cell cycle regulation or innate immunity. Plays an inhibitory role in TP53 transcriptional activity and subsequently in TP53 controlled cell growth arrest and senescence by inhibiting its EP300 mediated acetylation. Negatively regulates cytosolic RNA-mediated innate immune signaling at least in part by affecting RIPK1/IRF7 interactions. Alternatively, possesses antiviral activity by recognizing gammaherpesvirus transcripts in the context of lytic reactivation. Plays an essential role in cell cycle regulation in vascular smooth muscle cells by interacting with and regulating FANCA (Fanconi anemia complementation group A) mRNA. The protein is ATP-dependent RNA helicase DDX24 (Ddx24) of Mus musculus (Mouse).